Reading from the N-terminus, the 572-residue chain is Ribonuclease Y (572 aa).

A helical membrane pass occupies residues 1-21 (MPTLYVILSLLLGLIGGVLVQ). Disordered regions lie at residues 59–85 (HEAAEQDRQDAISKTQDAARRVQDAAE) and 110–142 (QLEAEREQAKADAAQQREALSTDRQETRRERED). Basic and acidic residues-rich tracts occupy residues 110-119 (QLEAEREQAK) and 129-142 (LSTDRQETRRERED). Positions 262–322 (SVSVVPIPSD…LRREVARHVL (61 aa)) constitute a KH domain. Residues 388-481 (VLKHSVQVAH…VAAADAISAA (94 aa)) enclose the HD domain.

This sequence belongs to the RNase Y family.

It is found in the cell membrane. In terms of biological role, endoribonuclease that initiates mRNA decay. The sequence is that of Ribonuclease Y from Deinococcus radiodurans (strain ATCC 13939 / DSM 20539 / JCM 16871 / CCUG 27074 / LMG 4051 / NBRC 15346 / NCIMB 9279 / VKM B-1422 / R1).